A 416-amino-acid chain; its full sequence is UDP-N-acetylglucosamine 1-carboxyvinyltransferase (416 aa).

22 to 23 provides a ligand contact to phosphoenolpyruvate; that stretch reads KN. Arg92 contacts UDP-N-acetyl-alpha-D-glucosamine. Residue Cys116 is the Proton donor of the active site. 2-(S-cysteinyl)pyruvic acid O-phosphothioketal is present on Cys116. UDP-N-acetyl-alpha-D-glucosamine contacts are provided by residues 121-125, Asp304, and Ile326; that span reads RPVDQ.

This sequence belongs to the EPSP synthase family. MurA subfamily.

Its subcellular location is the cytoplasm. It carries out the reaction phosphoenolpyruvate + UDP-N-acetyl-alpha-D-glucosamine = UDP-N-acetyl-3-O-(1-carboxyvinyl)-alpha-D-glucosamine + phosphate. Its pathway is cell wall biogenesis; peptidoglycan biosynthesis. In terms of biological role, cell wall formation. Adds enolpyruvyl to UDP-N-acetylglucosamine. This Cupriavidus pinatubonensis (strain JMP 134 / LMG 1197) (Cupriavidus necator (strain JMP 134)) protein is UDP-N-acetylglucosamine 1-carboxyvinyltransferase.